Here is a 253-residue protein sequence, read N- to C-terminus: Solute carrier family 66 member 2 (253 aa).

6 helical membrane passes run 7–27 (GWLLVPLHQLVSWGAAGAMVF), 49–69 (FSTYVCLVLLVANILRILFWF), 72–92 (HFESPLLWQSVVMILTMLLML), 125–145 (FADYVQCVLAFTGVAGYITYL), 150–170 (ALFVETLGFLAVLTEAMLGVP), and 214–234 (VCGLLQVLVDLAILGQAYVFT). The region spanning 14–80 (HQLVSWGAAG…RHFESPLLWQ (67 aa)) is the PQ-loop 1 domain. Residues 160–215 (AVLTEAMLGVPQLYRNHRHQSTEGMSIKMVLMWTSGDTFKTAYFLLNGAPLQFSVC) enclose the PQ-loop 2 domain.

The protein resides in the membrane. The polypeptide is Solute carrier family 66 member 2 (SLC66A2) (Bos taurus (Bovine)).